The following is a 439-amino-acid chain: Elongation factor Tu, mitochondrial (439 aa).

One can recognise a tr-type G domain in the interval 51–246 (KPHVNIGTIG…AVDSYITLPE (196 aa)). A G1 region spans residues 60 to 67 (GHVDHGKT). 60–67 (GHVDHGKT) contacts GTP. The tract at residues 101–105 (GITIS) is G2. The G3 stretch occupies residues 122-125 (DCPG). GTP is bound by residues 122–126 (DCPGH) and 177–180 (NKVD). Residues 177-180 (NKVD) form a G4 region. The interval 214–216 (SAL) is G5.

The protein belongs to the TRAFAC class translation factor GTPase superfamily. Classic translation factor GTPase family. EF-Tu/EF-1A subfamily.

The protein resides in the mitochondrion. Functionally, this protein promotes the GTP-dependent binding of aminoacyl-tRNA to the A-site of ribosomes during protein biosynthesis. This is Elongation factor Tu, mitochondrial (tuf1) from Schizosaccharomyces pombe (strain 972 / ATCC 24843) (Fission yeast).